Consider the following 42-residue polypeptide: Photosystem II reaction center protein J (42 aa).

Residues 10–30 (IPLWLIATVAGILVLTVVGIF) form a helical membrane-spanning segment.

Belongs to the PsbJ family. As to quaternary structure, PSII is composed of 1 copy each of membrane proteins PsbA, PsbB, PsbC, PsbD, PsbE, PsbF, PsbH, PsbI, PsbJ, PsbK, PsbL, PsbM, PsbT, PsbX, PsbY, PsbZ, Psb30/Ycf12, at least 3 peripheral proteins of the oxygen-evolving complex and a large number of cofactors. It forms dimeric complexes.

Its subcellular location is the plastid. It localises to the chloroplast thylakoid membrane. One of the components of the core complex of photosystem II (PSII). PSII is a light-driven water:plastoquinone oxidoreductase that uses light energy to abstract electrons from H(2)O, generating O(2) and a proton gradient subsequently used for ATP formation. It consists of a core antenna complex that captures photons, and an electron transfer chain that converts photonic excitation into a charge separation. This Chara vulgaris (Common stonewort) protein is Photosystem II reaction center protein J.